We begin with the raw amino-acid sequence, 102 residues long: RNA-binding protein Hfq (102 aa).

The Sm domain maps to 9–68; the sequence is DPFVNALRRERVPVSIYLVNGIKLQGQIESFDQFVILLKNTVSQMVYKHAISTVVPSRPV. Positions 63 to 102 are disordered; the sequence is VPSRPVSHHSNNAGGGASNNYHHGSNAQGSTAQQDSEETE. A compositionally biased stretch (low complexity) spans 70–88; that stretch reads HHSNNAGGGASNNYHHGSN.

Belongs to the Hfq family. As to quaternary structure, homohexamer.

Functionally, RNA chaperone that binds small regulatory RNA (sRNAs) and mRNAs to facilitate mRNA translational regulation in response to envelope stress, environmental stress and changes in metabolite concentrations. Also binds with high specificity to tRNAs. The chain is RNA-binding protein Hfq from Salmonella heidelberg (strain SL476).